Reading from the N-terminus, the 488-residue chain is N-succinylglutamate 5-semialdehyde dehydrogenase (488 aa).

221–226 (GSSRTG) is a binding site for NAD(+). Residues E244 and C278 contribute to the active site.

This sequence belongs to the aldehyde dehydrogenase family. AstD subfamily.

It carries out the reaction N-succinyl-L-glutamate 5-semialdehyde + NAD(+) + H2O = N-succinyl-L-glutamate + NADH + 2 H(+). Its pathway is amino-acid degradation; L-arginine degradation via AST pathway; L-glutamate and succinate from L-arginine: step 4/5. Its function is as follows. Catalyzes the NAD-dependent reduction of succinylglutamate semialdehyde into succinylglutamate. The chain is N-succinylglutamate 5-semialdehyde dehydrogenase from Pseudomonas syringae pv. tomato (strain ATCC BAA-871 / DC3000).